The chain runs to 1337 residues: ABC transporter D family member 1 (1337 aa).

A run of 4 helical transmembrane segments spans residues 24–44, 142–162, 247–267, and 342–362; these read ILLA…KSRV, APLF…LSTL, YASP…GTAI, and FLLK…PFFS. The ABC transmembrane type-1 1 domain occupies 117–395; that stretch reads VFRTALSNRL…SVIISLFQAL (279 aa). Residues 448–695 enclose the ABC transporter 1 domain; the sequence is VEFSDVKVVT…DAMVVQRAFA (248 aa). 481-488 contributes to the ATP binding site; it reads GPNGSGKS. The ABC transmembrane type-1 2 domain maps to 751–1049; sequence LIPTIFDKQG…VVSQSFMAFG (299 aa). A helical transmembrane segment spans residues 900 to 920; it reads LLTGQRGVAILYTYMLLGLGF. One can recognise an ABC transporter 2 domain in the interval 1091–1337; sequence LDSQDLLSFS…ELRSIEQTTE (247 aa). ATP is bound at residue 1130–1137; that stretch reads GPNGSGKT.

It belongs to the ABC transporter superfamily. ABCD family. Peroxisomal fatty acyl CoA transporter (TC 3.A.1.203) subfamily.

The protein resides in the peroxisome membrane. The protein localises to the glyoxysome membrane. The enzyme catalyses an acyl-CoA(out) + ATP + H2O = an acyl-CoA(in) + ADP + phosphate + H(+). In terms of biological role, contributes to the transport of fatty acids and their derivatives (acyl CoAs) across the peroxisomal membrane. Provides acetate to the glyoxylate cycle in developing seedlings. Involved in pollen tube elongation, ovule fertilization, and seeds germination after imbibition (controls the switch between the opposing developmental programs of dormancy and germination), probably by promoting beta-oxidation of storage lipids during gluconeogenesis. Required for biosynthesis of jasmonic acid and conversion of indole butyric acid to indole acetic acid. Confers sensitivity to monofluoroacetic acid (FAc), a toxic acetate analog, and to 2,4-dichlorophenoxybutyric acid (2,4-DB) and indole-3-butyric acid (IBA), two precursors of auxin after beta-oxidation. This Arabidopsis thaliana (Mouse-ear cress) protein is ABC transporter D family member 1.